The chain runs to 249 residues: Enolase-phosphatase E1 (249 aa).

Positions 14 and 16 each coordinate Mg(2+). Substrate is bound by residues 141-142 (SS) and lysine 175. Residue aspartate 200 coordinates Mg(2+).

It belongs to the HAD-like hydrolase superfamily. MasA/MtnC family. In terms of assembly, monomer. Mg(2+) serves as cofactor.

The protein localises to the cytoplasm. It localises to the nucleus. The enzyme catalyses 5-methylsulfanyl-2,3-dioxopentyl phosphate + H2O = 1,2-dihydroxy-5-(methylsulfanyl)pent-1-en-3-one + phosphate. It functions in the pathway amino-acid biosynthesis; L-methionine biosynthesis via salvage pathway; L-methionine from S-methyl-5-thio-alpha-D-ribose 1-phosphate: step 3/6. It participates in amino-acid biosynthesis; L-methionine biosynthesis via salvage pathway; L-methionine from S-methyl-5-thio-alpha-D-ribose 1-phosphate: step 4/6. Bifunctional enzyme that catalyzes the enolization of 2,3-diketo-5-methylthiopentyl-1-phosphate (DK-MTP-1-P) into the intermediate 2-hydroxy-3-keto-5-methylthiopentenyl-1-phosphate (HK-MTPenyl-1-P), which is then dephosphorylated to form the acireductone 1,2-dihydroxy-3-keto-5-methylthiopentene (DHK-MTPene). The chain is Enolase-phosphatase E1 from Drosophila virilis (Fruit fly).